The sequence spans 984 residues: Shutoff protein (984 aa).

The segment at 131-231 is disordered; it reads GVAAESDPSD…DLERDALVAP (101 aa). The segment covering 137 to 147 has biased composition (acidic residues); it reads DPSDDEPDPEP. The segment covering 148 to 159 has biased composition (basic and acidic residues); it reads EYDHREADHDSD. The span at 176–186 shows a compositional bias: acidic residues; that stretch reads VDEEPQDDSPS. The segment covering 190 to 202 has biased composition (polar residues); that stretch reads TASTVIEEAQTSA. The segment covering 205–216 has biased composition (basic and acidic residues); it reads DSHDDDTHRDDG. The binding to host EIF4G stretch occupies residues 411–476; that stretch reads LMETLLQPFA…AVRYTATLEL (66 aa). The RRM domain maps to 479-597; that stretch reads RVFREPSMVK…RLYSLPNPTA (119 aa). Disordered regions lie at residues 810–853 and 876–984; these read GVYK…GNRA and KVGP…RQEE. At Y812 the chain carries Phosphotyrosine; by host. Residues 913 to 923 are compositionally biased toward basic residues; that stretch reads AGGRRFGRRNT. Residues 945–958 are compositionally biased toward low complexity; it reads RGQQGEHPTTSPSA.

It belongs to the adenoviridae shutoff protein family. In terms of assembly, monomer. Interacts with hexon protein; this interaction allows chaperoning and trimerization of hexon proteins. Interacts (via N-terminus) with host initiation factor EIF4G (via C-terminus). Interacts (via RRM domain) with viral mRNAs that contain the tripartite leader; this interaction allows ribosome shunting and expression of viral late mRNAs. Post-translationally, might be cleaved by the viral protease. In terms of processing, phosphorylated. Tyrosine phosphorylation enhances preferential binding to tripartite leader mRNAs and allows ribosome shunting. Methylated. Asymmetric dimethylation by host PRMT1 of the Arg/Gly-rich region may regulate shutoff protein binding to hexon and promote the capsid assembly in the nucleus.

The protein localises to the host cytoplasm. Functionally, protein that inhibits host translation while promoting late viral translation by ribosome shunting. Blocks host cap-dependent translation by binding to eIF4G, displacing MKNK1 from cap initiation complexes and preventing EIF4E phosphorylation. Binds to the tripartite leader sequence of viral late mRNAs and recruits host eIF4G, PABPC1/poly-A binding protein and 40S ribosomes subunits on viral mRNAs, allowing ribosome shunting and efficient translation of late viral mRNAs even though conventional translation via ribosome scanning from the cap has been shut off in the host cell. During assembly, acts as a chaperone protein that helps hexon proteins assembly into trimers. This chain is Shutoff protein, found in Galliformes (FAdV-1).